The following is a 367-amino-acid chain: Peptide chain release factor 2 (367 aa).

Gln-249 carries the N5-methylglutamine modification.

The protein belongs to the prokaryotic/mitochondrial release factor family. Methylated by PrmC. Methylation increases the termination efficiency of RF2.

The protein localises to the cytoplasm. Peptide chain release factor 2 directs the termination of translation in response to the peptide chain termination codons UGA and UAA. This is Peptide chain release factor 2 from Thermotoga petrophila (strain ATCC BAA-488 / DSM 13995 / JCM 10881 / RKU-1).